Reading from the N-terminus, the 619-residue chain is Probable Xaa-Pro aminopeptidase P (619 aa).

Mn(2+) contacts are provided by D416, D427, E525, and E539.

Belongs to the peptidase M24B family. Requires Mn(2+) as cofactor.

The enzyme catalyses Release of any N-terminal amino acid, including proline, that is linked to proline, even from a dipeptide or tripeptide.. Its function is as follows. Catalyzes the removal of a penultimate prolyl residue from the N-termini of peptides. This is Probable Xaa-Pro aminopeptidase P (AMPP) from Tuber melanosporum (strain Mel28) (Perigord black truffle).